The sequence spans 276 residues: Large ribosomal subunit protein uL2 (276 aa).

2 disordered regions span residues 1–20 and 219–276; these read MGIKKYNPTTNGRRNMTTND and TVRG…RRKK. A compositionally biased stretch (polar residues) spans 7-20; the sequence is NPTTNGRRNMTTND.

This sequence belongs to the universal ribosomal protein uL2 family. Part of the 50S ribosomal subunit. Forms a bridge to the 30S subunit in the 70S ribosome.

One of the primary rRNA binding proteins. Required for association of the 30S and 50S subunits to form the 70S ribosome, for tRNA binding and peptide bond formation. It has been suggested to have peptidyltransferase activity; this is somewhat controversial. Makes several contacts with the 16S rRNA in the 70S ribosome. The polypeptide is Large ribosomal subunit protein uL2 (Bacillus cereus (strain Q1)).